Reading from the N-terminus, the 123-residue chain is uncharacterized protein (123 aa).

To M.tuberculosis Rv0477.

This is an uncharacterized protein from Mycobacterium leprae (strain TN).